A 484-amino-acid chain; its full sequence is Tyramine receptor 1 (484 aa).

Residues 1–54 (MVRVELQAASLMNGSSAAEEPQDALVGGDACGGRRPPSVLGVRLAVPEWEVAVT) lie on the Extracellular side of the membrane. Asn13 is a glycosylation site (N-linked (GlcNAc...) asparagine). The helical transmembrane segment at 55-77 (AVSLSLIILITIVGNVLVVLSVF) threads the bilayer. Residues 78–87 (TYKPLRIVQN) lie on the Cytoplasmic side of the membrane. The chain crosses the membrane as a helical span at residues 88–109 (FFIVSLAVADLTVAVLVMPFNV). Topologically, residues 110–126 (AYSLIQRWVFGIVVCKM) are extracellular. Cys124 and Cys203 are joined by a disulfide. A helical transmembrane segment spans residues 127 to 147 (WLTCDVLCCTASILNLCAIAL). Residues 148-167 (DRYWAITDPINYAQKRTLRR) lie on the Cytoplasmic side of the membrane. The chain crosses the membrane as a helical span at residues 168-190 (VLAMIAGVWLLSGVISSPPLIGW). Residues 191–215 (NDWPMEFNDTTPCQLTEEQGYVIYS) are Extracellular-facing. An N-linked (GlcNAc...) asparagine glycan is attached at Asn198. The helical transmembrane segment at 216–237 (SLGSFFIPLFIMTIVYVEIFIA) threads the bilayer. The Cytoplasmic segment spans residues 238-411 (TKRRLRERAK…LSKERRAART (174 aa)). The span at 253-280 (SAMKQQMAAQAVPSSVPSHDQESVSSET) shows a compositional bias: polar residues. Disordered stretches follow at residues 253 to 322 (SAMK…PAMV) and 358 to 383 (TTTA…PTPV). Over residues 295 to 306 (EKRRKTKKKSKK) the composition is skewed to basic residues. Over residues 361–378 (AVTDSPRSRTASQKGSTA) the composition is skewed to polar residues. Residues 412 to 433 (LGIIMGVFVVCWLPFFLMYVIV) form a helical membrane-spanning segment. Residues 434–448 (PFCNPSCKPSPKLVN) are Extracellular-facing. The chain crosses the membrane as a helical span at residues 449–470 (FITWLGYINSALNPIIYTIFNL). Residues 471–484 (DFRRAFKKLLHFKT) are Cytoplasmic-facing.

The protein belongs to the G-protein coupled receptor 1 family. As to expression, present mainly in the central nervous system, especially in the supra- and subesophageal, thoracic and abdominal ganglia. Not found in the distal part of optic lobes.

It localises to the cell membrane. G-protein coupled receptor for tyramine, a known neurotransmitter and neuromodulator and direct precursor of octopamine. The rank order of potency for agonists of this receptor is tyramine &gt; naphazoline &gt; tolazoline &gt; DL-octopamine &gt; dopamine &gt; epinephrine &gt; 5-hydroxytryptamine. For antagonists, the rank order is yohimbine &gt; chlorpromazine &gt; mianserin &gt; phentolamine &gt; metoclopramide. The polypeptide is Tyramine receptor 1 (GCR1) (Locusta migratoria (Migratory locust)).